Reading from the N-terminus, the 322-residue chain is Cysteine protease yopT1 (322 aa).

Active-site residues include Cys139, His258, and Asp274.

This sequence belongs to the peptidase C58 family. As to quaternary structure, interacts with human ARHA.

Its subcellular location is the secreted. Its function is as follows. Cysteine protease, which is translocated into infected cells and plays a central role in pathogenesis by cleaving the C-terminus end of the human small GTPase RhoA/ARHA, a regulator of cytoskeleton. Once cleaved, ARHA loses its lipid modification, and is released from the cell membrane, leading to the subsequent disruption of actin cytoskeleton of the host cell. The sequence is that of Cysteine protease yopT1 (yopT1) from Yersinia enterocolitica.